Here is a 1029-residue protein sequence, read N- to C-terminus: uncharacterized protein (1029 aa).

Positions 1–23 are enriched in basic and acidic residues; it reads MREWCMLRESRTNTPRRAAERGK. The segment at 1-31 is disordered; that stretch reads MREWCMLRESRTNTPRRAAERGKRPGGSSVR. The Guanylate cyclase domain occupies 39-168; sequence TALCYDLVGS…AALAMAARLQ (130 aa). 261-268 provides a ligand contact to ATP; that stretch reads GDAGIGKS.

This is an uncharacterized protein from Rhizobium meliloti (strain 1021) (Ensifer meliloti).